The sequence spans 454 residues: Glutamine synthetase (454 aa).

The GS beta-grasp domain occupies 25–111 (QGIDFLRLQF…LICDVVDREG (87 aa)). Residues 118-454 (PRQVLKNVLA…WETDRYLEKF (337 aa)) form the GS catalytic domain. 2 residues coordinate Mg(2+): Glu141 and Glu143. Glu193 contacts ATP. Positions 198 and 205 each coordinate Mg(2+). Residues 249-250 (NG) and Gly250 contribute to the L-glutamate site. His254 contributes to the Mg(2+) binding site. ATP is bound by residues 256–258 (HIS) and Ser258. The L-glutamate site is built by Arg308, Glu314, and Arg326. Arg326 and Arg331 together coordinate ATP. Residue Glu343 participates in Mg(2+) binding. Arg345 contacts L-glutamate.

The protein belongs to the glutamine synthetase family. As to quaternary structure, oligomer of 12 subunits arranged in the form of two hexagons. In its feedback-inhibited form, interacts with TnrA in order to block its DNA-binding activity. Mg(2+) is required as a cofactor.

It is found in the cytoplasm. It carries out the reaction L-glutamate + NH4(+) + ATP = L-glutamine + ADP + phosphate + H(+). Its activity is regulated as follows. Inhibited by glutamine. Glutamine synthetase (GS) is an unusual multitasking protein that functions as an enzyme, a transcription coregulator, and a chaperone in ammonium assimilation and in the regulation of genes involved in nitrogen metabolism. It catalyzes the ATP-dependent biosynthesis of glutamine from glutamate and ammonia. Feedback-inhibited GlnA also interacts with and regulates the activity of the transcriptional regulator TnrA. During nitrogen limitation, TnrA is in its DNA-binding active state and turns on the transcription of genes required for nitrogen assimilation. Under conditions of nitrogen excess, feedback-inhibited GlnA forms a stable complex with TnrA, which inhibits its DNA-binding activity. In contrast, feedback-inhibited GlnA acts as a chaperone to stabilize the DNA-binding activity of GlnR, which represses the transcription of nitrogen assimilation genes. In Halobacterium salinarum (strain ATCC 700922 / JCM 11081 / NRC-1) (Halobacterium halobium), this protein is Glutamine synthetase.